A 416-amino-acid polypeptide reads, in one-letter code: Phosphoglycerate kinase (416 aa).

14 residues coordinate (2R)-3-phosphoglycerate: V23, D24, F25, N26, Q38, R39, S62, H63, G65, R66, L121, R122, H169, and R170. G213 serves as a coordination point for ADP. G213 serves as a coordination point for CDP. 2 residues coordinate AMP: A214 and K215. A214 contributes to the ATP binding site. A Mg(2+)-binding site is contributed by A214. D218 contributes to the CDP binding site. A Mg(2+)-binding site is contributed by D218. K219 lines the AMP pocket. K219 is a binding site for ATP. Residue G237 coordinates ADP. G237 lines the CDP pocket. Residues G238 and G312 each coordinate AMP. The ATP site is built by G238 and G312. G337, A339, and F342 together coordinate CDP. An ADP-binding site is contributed by F342. Position 343 (E343) interacts with AMP. 3 residues coordinate ATP: E343, D374, and T375. Residue D374 coordinates Mg(2+).

This sequence belongs to the phosphoglycerate kinase family. In terms of assembly, monomer. Mg(2+) serves as cofactor.

The protein resides in the cytoplasm. The protein localises to the mitochondrion. The catalysed reaction is (2R)-3-phosphoglycerate + ATP = (2R)-3-phospho-glyceroyl phosphate + ADP. It participates in carbohydrate degradation; glycolysis; pyruvate from D-glyceraldehyde 3-phosphate: step 2/5. Catalyzes one of the two ATP producing reactions in the glycolytic pathway via the reversible conversion of 1,3-diphosphoglycerate to 3-phosphoglycerate. Both L- and D- forms of purine and pyrimidine nucleotides can be used as substrates, but the activity is much lower on pyrimidines. Negatively regulates the biosynthesis of acetyl-CoA from pyruvate in the mitochondrion. The polypeptide is Phosphoglycerate kinase (PGK) (Funneliformis mosseae (Endomycorrhizal fungus)).